The primary structure comprises 128 residues: CD59 glycoprotein (128 aa).

Residues 1-25 (MGIQGGSVLFGLLLILAVFCHSGHS) form the signal peptide. A UPAR/Ly6 domain is found at 26–108 (LQCYSCPYST…ILENGGTTLS (83 aa)). Cystine bridges form between Cys28–Cys51, Cys31–Cys38, Cys44–Cys64, Cys70–Cys88, and Cys89–Cys94. N-linked (GlcNAc...) asparagine glycosylation is present at Asn43. Asn102 carries GPI-anchor amidated asparagine lipidation. Positions 103-128 (GGTTLSKKTVLLLVTPFLAAAWSLHP) are cleaved as a propeptide — removed in mature form.

Interacts with T-cell surface antigen CD2. In terms of processing, N- and O-glycosylated.

It localises to the cell membrane. The protein localises to the secreted. In terms of biological role, potent inhibitor of the complement membrane attack complex (MAC) action, which protects self-cells from damage during complement activation. Acts by binding to the beta-haipins of C8 (C8A and C8B) components of the assembling MAC, forming an intermolecular beta-sheet that prevents incorporation of the multiple copies of C9 required for complete formation of the osmolytic pore. This is CD59 glycoprotein from Callithrix sp. (Marmoset).